We begin with the raw amino-acid sequence, 531 residues long: Multidrug resistance protein fnx1 (531 aa).

Residues 1 to 30 (MVDQVNLATEQTSLLYPEVSRKKEELSVNK) are Cytoplasmic-facing. Residues 31-51 (WTILPALWVGGFLSALDMTIV) form a helical membrane-spanning segment. The Lumenal segment spans residues 52–225 (ASLYPVIGSE…NASLLSRIDY (174 aa)). The helical transmembrane segment at 226 to 246 (LGSFLLVTGITALVVTFNMGG) threads the bilayer. At 247 to 252 (DAFPWV) the chain is on the cytoplasmic side. A helical transmembrane segment spans residues 253–273 (SPVIITLLVSSVLILFAFYWV). Residues 274-297 (EKNIAVEPIAPVEILSQPTPLNVC) lie on the Lumenal side of the membrane. Residues 298–318 (LGNFFNAFCSFVIVYELPLFF) traverse the membrane as a helical segment. Residues 319-360 (ETTLLMPSSEAGVRIFPYVISTSVGSLCSGLYMKKTGRYRNL) lie on the Cytoplasmic side of the membrane. The chain crosses the membrane as a helical span at residues 361-381 (VIAGFFFMLMGIVSFAVLTSF). The Lumenal portion of the chain corresponds to 382-385 (GHRT). A helical membrane pass occupies residues 386–406 (PLILISLCLAMTGCSYGMNLT). At 407–496 (STLIAIISSL…QKLVIKSYAT (90 aa)) the chain is on the cytoplasmic side. Residues 497–517 (AFTWTFALVAIIAFAGFWCSL) form a helical membrane-spanning segment. At 518–531 (RIKQFYLHTSVDRS) the chain is on the lumenal side.

Belongs to the major facilitator superfamily.

The protein localises to the vacuole membrane. In terms of biological role, efflux transporter. Confers resistance to a variety of toxic compounds. The polypeptide is Multidrug resistance protein fnx1 (fnx1) (Schizosaccharomyces pombe (strain 972 / ATCC 24843) (Fission yeast)).